Reading from the N-terminus, the 205-residue chain is ITG-like peptide (205 aa).

An N-terminal signal peptide occupies residues 1–15 (MRVYAAITLVLVANT). 2 consecutive propeptides follow at residues 16–188 (AYIG…TSGE) and 202–205 (MPFA).

As to expression, expressed throughout the nervous system (at protein level).

Its subcellular location is the secreted. This is ITG-like peptide from Camponotus floridanus (Florida carpenter ant).